The sequence spans 208 residues: uncharacterized protein (208 aa).

4 4Fe-4S ferredoxin-type domains span residues 59–88, 114–145, 147–176, and 174–203; these read GVLV…SVGT, GDLN…WQQK, GCIT…VNTE, and NTES…IIEW. Residues Cys-68, Cys-71, Cys-74, Cys-78, Cys-123, Cys-126, Cys-131, Cys-135, Cys-156, Cys-159, Cys-162, Cys-166, Cys-183, Cys-186, Cys-189, and Cys-193 each coordinate [4Fe-4S] cluster.

This is an uncharacterized protein from Escherichia coli O157:H7.